The following is a 225-amino-acid chain: Glutathione S-transferase U2 (225 aa).

In terms of domain architecture, GST N-terminal spans Glu-6 to Pro-85. Glutathione is bound by residues Ser-16–Pro-17, Lys-42–Lys-43, Lys-56–Val-57, and Glu-69–Ser-70. One can recognise a GST C-terminal domain in the interval Asp-90–Ile-217. A Phosphothreonine modification is found at Thr-151.

This sequence belongs to the GST superfamily. Tau family.

It localises to the cytoplasm. Its subcellular location is the cytosol. The catalysed reaction is RX + glutathione = an S-substituted glutathione + a halide anion + H(+). May be involved in the conjugation of reduced glutathione to a wide number of exogenous and endogenous hydrophobic electrophiles and have a detoxification role against certain herbicides. In Arabidopsis thaliana (Mouse-ear cress), this protein is Glutathione S-transferase U2 (GSTU2).